The following is a 360-amino-acid chain: Peptide chain release factor 1 (360 aa).

Q235 carries the post-translational modification N5-methylglutamine.

Belongs to the prokaryotic/mitochondrial release factor family. Post-translationally, methylated by PrmC. Methylation increases the termination efficiency of RF1.

The protein resides in the cytoplasm. In terms of biological role, peptide chain release factor 1 directs the termination of translation in response to the peptide chain termination codons UAG and UAA. This chain is Peptide chain release factor 1, found in Burkholderia ambifaria (strain MC40-6).